Here is a 541-residue protein sequence, read N- to C-terminus: Chaperonin GroEL 2 (541 aa).

Residues 29 to 32, 86 to 90, glycine 413, and aspartate 492 contribute to the ATP site; these read TLGP and DGTTT.

This sequence belongs to the chaperonin (HSP60) family. Forms a cylinder of 14 subunits composed of two heptameric rings stacked back-to-back. Interacts with the co-chaperonin GroES.

The protein resides in the cytoplasm. It carries out the reaction ATP + H2O + a folded polypeptide = ADP + phosphate + an unfolded polypeptide.. Its function is as follows. Together with its co-chaperonin GroES, plays an essential role in assisting protein folding. The GroEL-GroES system forms a nano-cage that allows encapsulation of the non-native substrate proteins and provides a physical environment optimized to promote and accelerate protein folding. The sequence is that of Chaperonin GroEL 2 from Nocardia farcinica (strain IFM 10152).